The primary structure comprises 370 residues: MKFVDEAYIDVIAGNGGNGCVSFRREKFIPFGGPNGGDGGRGGSVYAVADRNLNTLIDFRFARRHEARHGEHGRGSDQFGAAAEDIVMRMPVGTIISDAETGAPVAELLEPGERILIAKGGDGGFGNLHYKTSTNRAPRQKTPGWPGEQKKLKLELRVLADVGLLGMPNAGKSTLISAISNARPKIADYPFTTLHPNLGVVRVGPEQSFVVADVPGLIEGAAEGAGLGHRFLRHLQRTRLLLHMIDMAPFDDTDPVAQAKAIVAELKKYDPALYDKPRWLVLNKLDVVPAEERAARVKDFVKRFKWKGPVFEISALTREGCETLVQAIYQHVASYQTHYVDPDVRFAEPEADESDDEPRFAPQADDPRFR.

The Obg domain maps to 1-159 (MKFVDEAYID…KKLKLELRVL (159 aa)). In terms of domain architecture, OBG-type G spans 160-333 (ADVGLLGMPN…LVQAIYQHVA (174 aa)). GTP-binding positions include 166 to 173 (GMPNAGKS), 191 to 195 (FTTLH), 213 to 216 (DVPG), 283 to 286 (NKLD), and 314 to 316 (SAL). Mg(2+)-binding residues include Ser-173 and Thr-193. The tract at residues 346 to 370 (FAEPEADESDDEPRFAPQADDPRFR) is disordered.

This sequence belongs to the TRAFAC class OBG-HflX-like GTPase superfamily. OBG GTPase family. Monomer. Mg(2+) is required as a cofactor.

It is found in the cytoplasm. An essential GTPase which binds GTP, GDP and possibly (p)ppGpp with moderate affinity, with high nucleotide exchange rates and a fairly low GTP hydrolysis rate. Plays a role in control of the cell cycle, stress response, ribosome biogenesis and in those bacteria that undergo differentiation, in morphogenesis control. The chain is GTPase Obg from Methylibium petroleiphilum (strain ATCC BAA-1232 / LMG 22953 / PM1).